A 143-amino-acid polypeptide reads, in one-letter code: Small ribosomal subunit protein bS18m (143 aa).

The protein belongs to the bacterial ribosomal protein bS18 family. As to quaternary structure, component of the mitochondrial ribosome small subunit (28S) which comprises a 12S rRNA and about 30 distinct proteins.

Its subcellular location is the mitochondrion. The polypeptide is Small ribosomal subunit protein bS18m (MRPS18C) (Bos taurus (Bovine)).